A 537-amino-acid polypeptide reads, in one-letter code: Methionine--tRNA ligase (537 aa).

Positions 11 to 21 (AYPNAAPHIGH) match the 'HIGH' region motif. A 'KMSKS' region motif is present at residues 301 to 305 (KMSKS). Residue Lys-304 coordinates ATP. The tract at residues 503–537 (PPPTGVFPRYQPSEIEGADPVKSSSKRREHNKRRE) is disordered. Residues 526 to 537 (SSKRREHNKRRE) show a composition bias toward basic residues.

It belongs to the class-I aminoacyl-tRNA synthetase family. MetG type 2B subfamily. As to quaternary structure, monomer.

It localises to the cytoplasm. It carries out the reaction tRNA(Met) + L-methionine + ATP = L-methionyl-tRNA(Met) + AMP + diphosphate. In terms of biological role, is required not only for elongation of protein synthesis but also for the initiation of all mRNA translation through initiator tRNA(fMet) aminoacylation. This Mycobacterium leprae (strain TN) protein is Methionine--tRNA ligase.